The primary structure comprises 144 residues: MKFNKMVSSDRGKNRKRHFNAPSHMRRKIMSSPMSKELRQKYNCRSMPIRKDDEVQVVRGHFKGQQVGKVVQVYRKKFVVHIERIQREKANGATVYVGIHPSKVLIVKLKMDKDRKRILDNKAKSRAKALAEKGKYTEETMETS.

A disordered region spans residues 1–22 (MKFNKMVSSDRGKNRKRHFNAP). Basic residues predominate over residues 13–22 (KNRKRHFNAP).

It belongs to the universal ribosomal protein uL24 family.

The polypeptide is Large ribosomal subunit protein uL24 (RPL26) (Littorina littorea (Common periwinkle)).